We begin with the raw amino-acid sequence, 93 residues long: Small ribosomal subunit protein uS19c (93 aa).

Belongs to the universal ribosomal protein uS19 family.

The protein resides in the plastid. It localises to the chloroplast. In terms of biological role, protein S19 forms a complex with S13 that binds strongly to the 16S ribosomal RNA. The chain is Small ribosomal subunit protein uS19c from Lolium perenne (Perennial ryegrass).